Consider the following 431-residue polypeptide: tRNA-specific 2-thiouridylase MnmA (431 aa).

ATP-binding positions include 35–42 and L61; that span reads AMSGGVDS. C129 serves as the catalytic Nucleophile. Residues C129 and C226 are joined by a disulfide bond. G153 lines the ATP pocket. Positions 176–178 are interaction with tRNA; that stretch reads RDQ. Catalysis depends on C226, which acts as the Cysteine persulfide intermediate. The tract at residues 407-431 is disordered; sequence PKPPNEDLLDTNESSDLVSPKRSAC.

This sequence belongs to the MnmA/TRMU family.

The protein localises to the cytoplasm. The catalysed reaction is S-sulfanyl-L-cysteinyl-[protein] + uridine(34) in tRNA + AH2 + ATP = 2-thiouridine(34) in tRNA + L-cysteinyl-[protein] + A + AMP + diphosphate + H(+). Its function is as follows. Catalyzes the 2-thiolation of uridine at the wobble position (U34) of tRNA, leading to the formation of s(2)U34. This chain is tRNA-specific 2-thiouridylase MnmA, found in Beijerinckia indica subsp. indica (strain ATCC 9039 / DSM 1715 / NCIMB 8712).